The sequence spans 129 residues: uncharacterized protein (129 aa).

Residues Tyr-8–Ile-24 traverse the membrane as a helical segment.

Its subcellular location is the membrane. This is an uncharacterized protein from Rickettsia prowazekii (strain Madrid E).